The chain runs to 445 residues: Phosphoglucosamine mutase (445 aa).

Ser-99 acts as the Phosphoserine intermediate in catalysis. 4 residues coordinate Mg(2+): Ser-99, Asp-242, Asp-244, and Asp-246. A Phosphoserine modification is found at Ser-99.

The protein belongs to the phosphohexose mutase family. It depends on Mg(2+) as a cofactor. In terms of processing, activated by phosphorylation.

It catalyses the reaction alpha-D-glucosamine 1-phosphate = D-glucosamine 6-phosphate. Catalyzes the conversion of glucosamine-6-phosphate to glucosamine-1-phosphate. The sequence is that of Phosphoglucosamine mutase from Sulfurovum sp. (strain NBC37-1).